Consider the following 223-residue polypeptide: Ion-translocating oxidoreductase complex subunit E (223 aa).

7 consecutive transmembrane segments (helical) span residues 17–37 (SLVQ…TINA), 38–58 (IGLG…ISIL), 68–88 (IPIY…LLHA), 91–111 (FNLY…CIVV), 124–144 (VISF…MFVI), 156–176 (FLFG…FTFI), and 181–201 (TIIL…VIAF).

It belongs to the NqrDE/RnfAE family. The complex is composed of six subunits: RnfA, RnfB, RnfC, RnfD, RnfE and RnfG.

Its subcellular location is the cell inner membrane. Functionally, part of a membrane-bound complex that couples electron transfer with translocation of ions across the membrane. This is Ion-translocating oxidoreductase complex subunit E from Buchnera aphidicola subsp. Schizaphis graminum (strain Sg).